The sequence spans 193 residues: Thymidine kinase (193 aa).

Residues 9–16 (SAMNAGKS) and 87–90 (DEAQ) each bind ATP. Glu-88 functions as the Proton acceptor in the catalytic mechanism. Positions 145, 147, 182, and 185 each coordinate Zn(2+).

Belongs to the thymidine kinase family. As to quaternary structure, homotetramer.

The protein localises to the cytoplasm. It carries out the reaction thymidine + ATP = dTMP + ADP + H(+). This Idiomarina loihiensis (strain ATCC BAA-735 / DSM 15497 / L2-TR) protein is Thymidine kinase.